Consider the following 493-residue polypeptide: MSADVSTKPRGSLPIPTAPGESNECYRVIRTLGEGAFGEVLLIVNNKNPDMAVAMKKMQITTQANTNNIRKEFLIQQKLSKVGHDNFIRAIGMRTENGFHFLFLEYADGGELFDKIEPDHGMPTAIAQFYFRQLIEGLKYIHDCDIVHRDIKPENLLLTTSHVLKISDFGMATLYRNEGKERLLDLSCGTIPYAAPEVCAGGKYRGPPIDVWSSGIVLIAMLTGELPWDRASDSSYAYLQWLGNNNLDENPWRKMDVRALCMLRRILTDNVHRRATIEQIKTDPWFTHNYGKLEMTYGRPLKRARYADENSPDCNISSTQQADAVSTAKRRHLETPDKVAHVERQNASFSQPTRTEDLLLTQNIDMSQNNTNLLERMVCRMTRFCTKFDVPTSYRQLIHASEHAGYEVRQTADNRLLVTFREVSMMVTLYSLKTESRVMVDFRRSRGDGIQFKKMFLEVRNRMNDSICVDGQNFLEDCGYVPRKPQFVREANA.

The 261-residue stretch at 26–286 (YRVIRTLGEG…IEQIKTDPWF (261 aa)) folds into the Protein kinase domain. Residues 32-40 (LGEGAFGEV) and Lys56 each bind ATP. Residue Asp150 is the Proton acceptor of the active site. A disordered region spans residues 308-348 (DENSPDCNISSTQQADAVSTAKRRHLETPDKVAHVERQNAS). The segment covering 312-324 (PDCNISSTQQADA) has biased composition (polar residues). Positions 333–344 (LETPDKVAHVER) are enriched in basic and acidic residues.

This sequence belongs to the protein kinase superfamily. CAMK Ser/Thr protein kinase family. NIM1 subfamily.

The protein resides in the cytoplasm. It is found in the nucleus. It catalyses the reaction L-seryl-[protein] + ATP = O-phospho-L-seryl-[protein] + ADP + H(+). It carries out the reaction L-threonyl-[protein] + ATP = O-phospho-L-threonyl-[protein] + ADP + H(+). Its function is as follows. Serine/threonine-protein kinase which is required for checkpoint-mediated cell cycle arrest and activation of DNA repair in response to the presence of DNA damage or unreplicated DNA. May also negatively regulate cell cycle progression during unperturbed cell cycles. Required for checkpoint mediated cell cycle arrest in response to DNA damage in germline cells. Essential for embryogenesis. The protein is Serine/threonine-protein kinase chk-1 (chk-1) of Caenorhabditis briggsae.